A 461-amino-acid chain; its full sequence is Tol-Pal system protein TolB 2 (461 aa).

The N-terminal stretch at 1–20 (MKIRHLLLLAGLVSAPAIVA) is a signal peptide. The interval 28–47 (SSSAAQASGDDDGGLTGSVS) is disordered.

The protein belongs to the TolB family. As to quaternary structure, the Tol-Pal system is composed of five core proteins: the inner membrane proteins TolA, TolQ and TolR, the periplasmic protein TolB and the outer membrane protein Pal. They form a network linking the inner and outer membranes and the peptidoglycan layer.

It is found in the periplasm. Its function is as follows. Part of the Tol-Pal system, which plays a role in outer membrane invagination during cell division and is important for maintaining outer membrane integrity. The chain is Tol-Pal system protein TolB 2 from Novosphingobium aromaticivorans (strain ATCC 700278 / DSM 12444 / CCUG 56034 / CIP 105152 / NBRC 16084 / F199).